The following is a 715-amino-acid chain: Protein sneaky (715 aa).

Over 1–32 (MLSLLTRPFLPIFCFLYGPQSEGSTRIQCLRR) the chain is Cytoplasmic. A helical transmembrane segment spans residues 33 to 53 (FVTFLLGLVLGFLLWKLAALN). The Extracellular segment spans residues 54–66 (FTLGRLFVNGATD). A helical membrane pass occupies residues 67–87 (LYVFIIFVLVTGTIFMLSLPV). Topologically, residues 88–109 (RAVILLIFVALVGKSGRTYLRA) are cytoplasmic. A helical transmembrane segment spans residues 110–130 (VAFAFIISGPIANLVENAGEV). Topologically, residues 131–373 (ARVFVCTTVL…FERQKRIFNK (243 aa)) are extracellular. The chain crosses the membrane as a helical span at residues 374-394 (VMGILQKILCLFMLRMVYVSI). The Cytoplasmic portion of the chain corresponds to 395-457 (NYYVKYLNDV…FSRTHHESTT (63 aa)). The chain crosses the membrane as a helical span at residues 458 to 478 (VCFNLLQFLLELVTAGLFILI). Residues 479–553 (DHLVVELLQI…NAHVLPKKMY (75 aa)) lie on the Extracellular side of the membrane. Residues 554 to 574 (YQLILLYLIIIVLIYQSTTFL) traverse the membrane as a helical segment. The Cytoplasmic portion of the chain corresponds to 575-715 (RMRRVICSFF…VEVYTYRKEK (141 aa)). An RING-type; degenerate zinc finger spans residues 655 to 691 (CMICRGLEDSTFTVCGNCGLPYCDDCAEDLNSVCFQC).

Specifically expressed in testis.

Its subcellular location is the cytoplasmic vesicle. It localises to the secretory vesicle. The protein resides in the acrosome membrane. It is found in the cytoplasm. The protein localises to the cytoplasmic vesicle membrane. In terms of biological role, component of the sperm acrosome membrane. Required for breakdown of the sperm plasma membrane after sperm entry into the egg, which is an essential prerequisite for successful fertilization. The protein is Protein sneaky of Drosophila melanogaster (Fruit fly).